Here is a 78-residue protein sequence, read N- to C-terminus: Leukemia-associated protein 1 (78 aa).

Its function is as follows. May act as a tumor suppressor. The chain is Leukemia-associated protein 1 (DLEU1) from Homo sapiens (Human).